The chain runs to 410 residues: Phosphoglycerate kinase (410 aa).

Residues 19-21 (DLN), Arg34, 57-60 (HQGK), Arg114, and Arg154 contribute to the substrate site. ATP is bound by residues Glu332 and 358–361 (GGHS).

This sequence belongs to the phosphoglycerate kinase family. In terms of assembly, homodimer.

It is found in the cytoplasm. It catalyses the reaction (2R)-3-phosphoglycerate + ATP = (2R)-3-phospho-glyceroyl phosphate + ADP. The protein operates within carbohydrate degradation; glycolysis; pyruvate from D-glyceraldehyde 3-phosphate: step 2/5. The sequence is that of Phosphoglycerate kinase (pgk) from Pyrococcus horikoshii (strain ATCC 700860 / DSM 12428 / JCM 9974 / NBRC 100139 / OT-3).